The primary structure comprises 830 residues: Lon protease (830 aa).

A disordered region spans residues 1–28 (MTFDTNDDSIAKNSLAPYNQETEQQQEE). In terms of domain architecture, Lon N-terminal spans 50–245 (IPILPLRDVV…LVITHLTHEA (196 aa)). 397-404 (GPPGVGKT) lines the ATP pocket. Residues 633–814 (TLPPGVALGL…DEVLPLAFSE (182 aa)) form the Lon proteolytic domain. Residues Ser720 and Lys763 contribute to the active site.

It belongs to the peptidase S16 family. As to quaternary structure, homohexamer. Organized in a ring with a central cavity.

The protein localises to the cytoplasm. The catalysed reaction is Hydrolysis of proteins in presence of ATP.. Its function is as follows. ATP-dependent serine protease that mediates the selective degradation of mutant and abnormal proteins as well as certain short-lived regulatory proteins. Required for cellular homeostasis and for survival from DNA damage and developmental changes induced by stress. Degrades polypeptides processively to yield small peptide fragments that are 5 to 10 amino acids long. Binds to DNA in a double-stranded, site-specific manner. This Lawsonia intracellularis (strain PHE/MN1-00) protein is Lon protease.